We begin with the raw amino-acid sequence, 415 residues long: Heterogeneous nuclear ribonucleoprotein F (415 aa).

An N-acetylmethionine modification is found at Met-1. Position 2 is an N-acetylmethionine; in Heterogeneous nuclear ribonucleoprotein F, N-terminally processed (Met-2). The 73-residue stretch at 13–85 folds into the RRM 1 domain; that stretch reads VKLRGLPWSC…ESMGHRYIEV (73 aa). Lys-72 participates in a covalent cross-link: Glycyl lysine isopeptide (Lys-Gly) (interchain with G-Cter in SUMO). Residues 81-86 form an interaction with RNA region; sequence RYIEVF. Lys-87 participates in a covalent cross-link: Glycyl lysine isopeptide (Lys-Gly) (interchain with G-Cter in SUMO2). A phosphoserine mark is found at Ser-104, Ser-107, and Ser-161. An RRM 2 domain is found at 111–188; that stretch reads GFVRLRGLPF…RYIEVFKSSQ (78 aa). Lys-167 is covalently cross-linked (Glycyl lysine isopeptide (Lys-Gly) (interchain with G-Cter in SUMO2)). Residues 179-184 form an interaction with RNA region; it reads RYIEVF. Lys-185 participates in a covalent cross-link: Glycyl lysine isopeptide (Lys-Gly) (interchain with G-Cter in SUMO2). Ser-187, Ser-193, and Ser-195 each carry phosphoserine. An N6-acetyllysine; alternate modification is found at Lys-200. Lys-200 participates in a covalent cross-link: Glycyl lysine isopeptide (Lys-Gly) (interchain with G-Cter in SUMO2); alternate. Position 215 is a phosphothreonine (Thr-215). Lys-224 carries the N6-acetyllysine; alternate modification. Lys-224 participates in a covalent cross-link: Glycyl lysine isopeptide (Lys-Gly) (interchain with G-Cter in SUMO2); alternate. Phosphoserine is present on Ser-265. One can recognise an RRM 3 domain in the interval 289 to 366; sequence HCVHMRGLPY…IELFLNSTTG (78 aa). The tract at residues 355-360 is interaction with RNA; it reads RYIELF.

As to quaternary structure, identified in the spliceosome C complex. Interacts with AGO1, AGO2, TBP and TXNL4/DIM1. Post-translationally, sumoylated.

It localises to the nucleus. Its subcellular location is the nucleoplasm. Functionally, component of the heterogeneous nuclear ribonucleoprotein (hnRNP) complexes which provide the substrate for the processing events that pre-mRNAs undergo before becoming functional, translatable mRNAs in the cytoplasm. Plays a role in the regulation of alternative splicing events. Binds G-rich sequences in pre-mRNAs and keeps target RNA in an unfolded state. This chain is Heterogeneous nuclear ribonucleoprotein F (HNRNPF), found in Macaca fascicularis (Crab-eating macaque).